A 268-amino-acid chain; its full sequence is Protein MGF 300-1L (268 aa).

Residues 1-175 (MVSLTTCCLK…QTFKIFYAKN (175 aa)) are Cytoplasmic-facing. The chain crosses the membrane as a helical span at residues 176 to 193 (YSLSTLYCIFLAIYYKRY). Residues 194 to 268 (TALRKMVKIY…MYAFSQNNFW (75 aa)) are Extracellular-facing.

This sequence belongs to the asfivirus MGF 300 family.

The protein resides in the host membrane. In terms of biological role, plays a role in virus cell tropism, and may be required for efficient virus replication in macrophages. The protein is Protein MGF 300-1L of African swine fever virus (isolate Tick/South Africa/Pretoriuskop Pr4/1996) (ASFV).